Consider the following 82-residue polypeptide: Small ribosomal subunit protein uS17 (82 aa).

Belongs to the universal ribosomal protein uS17 family. Part of the 30S ribosomal subunit.

Functionally, one of the primary rRNA binding proteins, it binds specifically to the 5'-end of 16S ribosomal RNA. The sequence is that of Small ribosomal subunit protein uS17 from Rickettsia rickettsii (strain Iowa).